We begin with the raw amino-acid sequence, 1045 residues long: 3-hydroxy-3-methylglutaryl-coenzyme A reductase 2 (1045 aa).

Topologically, residues 1 to 24 (MSLPLKTIVHLVKPFACTARFSAR) are cytoplasmic. A helical membrane pass occupies residues 25–45 (YPIHVIVVAVLLSAAAYLSVT). At 46–186 (QSYLNEWKLD…FSNKTSEFDQ (141 aa)) the chain is on the lumenal side. N-linked (GlcNAc...) asparagine glycans are attached at residues Asn-115, Asn-150, Asn-158, and Asn-179. The chain crosses the membrane as a helical span at residues 187-207 (FDLFIILAAYLTLFYTLCCLF). The 169-residue stretch at 188 to 356 (DLFIILAAYL…ATFYSAILSM (169 aa)) folds into the SSD domain. The Cytoplasmic portion of the chain corresponds to 208-216 (NDMRKIGSK). A helical transmembrane segment spans residues 217 to 237 (FWLSFSALSNSACALYLSLYT). Topologically, residues 238 to 243 (THSLLK) are lumenal. The chain crosses the membrane as a helical span at residues 244–264 (KPASLLSLVIGLPFIVVIIGF). The Cytoplasmic portion of the chain corresponds to 265-301 (KHKVRLAAFSLQKFHRISIDKKITVSNIIYEAMFQEG). A helical membrane pass occupies residues 302–322 (AYLIRDYLFYISSFIGCAIYA). Residues 323–324 (RH) lie on the Lumenal side of the membrane. Residues 325–345 (LPGLVNFCILSTFMLVFDLLL) traverse the membrane as a helical segment. Over 346-402 (SATFYSAILSMKLEINIIHRSTVIRQTLEEDGVVPTTADIIYKDETASEPHFLRSNV) the chain is Cytoplasmic. Residues 403 to 423 (AIILGKASVIGLLLLINLYVF) traverse the membrane as a helical segment. The Lumenal portion of the chain corresponds to 424-497 (TDKLNATILN…DSVSNAIRDQ (74 aa)). N-linked (GlcNAc...) asparagine glycans are attached at residues Asn-428 and Asn-455. The helical transmembrane segment at 498-518 (FISKLLFFAFAVSISINVYLL) threads the bilayer. The Cytoplasmic portion of the chain corresponds to 519–1045 (NAAKIHTGYM…GPPCKTSALL (527 aa)). A Phosphothreonine modification is found at Thr-565. The active-site Charge relay system is Glu-710. 716-722 (SAMRGCK) contributes to the CoA binding site. Residues 777 to 779 (SRF) and 804 to 812 (DAMGMNMIS) each bind NADP(+). Residue Lys-844 is the Charge relay system of the active site. 873 to 875 (VLK) is a binding site for CoA. Asp-920 (charge relay system) is an active-site residue. 1015–1016 (SH) contributes to the CoA binding site. The active-site Proton donor is the His-1016. Residues 1018 to 1045 (THNRKTNKANELPQPSNKGPPCKTSALL) form a disordered region. An NADP(+)-binding site is contributed by 1020–1021 (NR).

Belongs to the HMG-CoA reductase family.

The protein localises to the endoplasmic reticulum membrane. The protein resides in the nucleus envelope. The catalysed reaction is (R)-mevalonate + 2 NADP(+) + CoA = (3S)-3-hydroxy-3-methylglutaryl-CoA + 2 NADPH + 2 H(+). Its pathway is metabolic intermediate biosynthesis; (R)-mevalonate biosynthesis; (R)-mevalonate from acetyl-CoA: step 3/3. Functionally, HMG-CoA reductase; part of the first module of ergosterol biosynthesis pathway constitutes by the early steps of the pathway, conserved across all eukaryotes, and which results in the formation of mevalonate from acetyl-coenzyme A (acetyl-CoA). HMG1 and HMG2 catalyze the reduction of hydroxymethylglutaryl-CoA (HMG-CoA) to mevalonate that is the rate-limiting step within the first mosule. The first module starts with the action of the cytosolic acetyl-CoA acetyltransferase ERG10 that catalyzes the formation of acetoacetyl-CoA. The hydroxymethylglutaryl-CoA synthase ERG13 then condenses acetyl-CoA with acetoacetyl-CoA to form HMG-CoA. The rate-limiting step of the early module is the reduction to mevalonate by the 3-hydroxy-3-methylglutaryl-coenzyme A (HMG-CoA) reductases HMG1 and HMG2 which are derived from a single ancestral HMGR gene by gene duplication. The sequence is that of 3-hydroxy-3-methylglutaryl-coenzyme A reductase 2 from Saccharomyces cerevisiae (strain ATCC 204508 / S288c) (Baker's yeast).